Here is a 242-residue protein sequence, read N- to C-terminus: Probable transcriptional regulatory protein XOO1543 (242 aa).

The protein belongs to the TACO1 family.

Its subcellular location is the cytoplasm. The sequence is that of Probable transcriptional regulatory protein XOO1543 from Xanthomonas oryzae pv. oryzae (strain MAFF 311018).